A 711-amino-acid chain; its full sequence is Progesterone receptor (711 aa).

Residues 1–347 (MEDKSKQCLQ…YGFDALPRKI (347 aa)) are modulating, Pro-Rich. 2 consecutive NR C4-type zinc fingers follow at residues 348–368 (CLICSDEASGCHYGALTCGSC) and 384–408 (CAGRNDCIGDKIRRKNCPSCRLKKC). The nuclear receptor DNA-binding region spans 348–420 (CLICSDEASG…AGMVLGGRKF (73 aa)). Residues 457–691 (QEVQYFPELL…EFPEMMTEVI (235 aa)) form the NR LBD domain.

It belongs to the nuclear hormone receptor family. NR3 subfamily. Expressed in all tissues examined: highly expressed in testis and brain. Also expressed in heart, lung, liver, kidney, stomach and small intestine.

It localises to the nucleus. Its function is as follows. The steroid hormones and their receptors are involved in the regulation of eukaryotic gene expression and affect cellular proliferation and differentiation in target tissues. The polypeptide is Progesterone receptor (pgr) (Rana dybowskii (Dybovsky's frog)).